Here is a 481-residue protein sequence, read N- to C-terminus: PRAME family member 22 (481 aa).

One copy of the LRR 1; degenerate repeat lies at 99–126; the sequence is RWKLQVLELRDVDENFWTIWSGARPLSC. One copy of the LRR 2; degenerate repeat lies at 181–205; sequence HLCCTKVVNYSMSILNFRNILETVY. The stretch at 206-232 is one LRR 3; degenerate repeat; sequence PDSIQVLEIWNMCWPCMIVEFSRYLSQ. An LRR 4; degenerate repeat occupies 233–267; sequence MRNLRKLFISDGCRYLLSSDSQEQLVAEFSSVLLR. LRR repeat units follow at residues 268–293, 294–325, 326–344, 350–377, and 378–402; these read LEYLQMLYVRRVCFFRGHLDQLIRCL, RSPLETLALTYGFLEKVDLKCLPRYPSLSQLK, QLNLSHGALRFIRLEPLRA, AATLQTLFLVDCGIRDSKLRVILPALSC, and CSNLTTFCFHGNDTSMDGLKDLLRH.

Belongs to the PRAME family.

In Homo sapiens (Human), this protein is PRAME family member 22.